Here is a 767-residue protein sequence, read N- to C-terminus: Granule-bound starch synthase 2, chloroplastic/amyloplastic (767 aa).

Residues 1 to 45 (MENSILLHSGNQFHPNLPLLALRPKKLSLIHGSSREQMWRIKRVK) constitute a chloroplast transit peptide. 2 disordered regions span residues 160 to 204 (KRDL…SSQE) and 226 to 268 (YMPS…EKPP). The span at 172–188 (SRSSITASSQISSTVSS) shows a compositional bias: low complexity. The segment covering 230–245 (LRKESSASHVEQRNEN) has biased composition (basic and acidic residues). Residues 253 to 262 (ANEETEDPVN) are compositionally biased toward acidic residues. K290 is an ADP-alpha-D-glucose binding site.

This sequence belongs to the glycosyltransferase 1 family. Bacterial/plant glycogen synthase subfamily.

The protein resides in the plastid. It localises to the chloroplast. It is found in the amyloplast. It catalyses the reaction [(1-&gt;4)-alpha-D-glucosyl](n) + ADP-alpha-D-glucose = [(1-&gt;4)-alpha-D-glucosyl](n+1) + ADP + H(+). It participates in glycan biosynthesis; starch biosynthesis. Functionally, accounts for only 10 to 15% of the total soluble starch synthase activity in tubers. In Solanum tuberosum (Potato), this protein is Granule-bound starch synthase 2, chloroplastic/amyloplastic (SS2).